The primary structure comprises 458 residues: Argininosuccinate lyase (458 aa).

It belongs to the lyase 1 family. Argininosuccinate lyase subfamily.

The protein resides in the cytoplasm. It carries out the reaction 2-(N(omega)-L-arginino)succinate = fumarate + L-arginine. Its pathway is amino-acid biosynthesis; L-arginine biosynthesis; L-arginine from L-ornithine and carbamoyl phosphate: step 3/3. This Salmonella typhi protein is Argininosuccinate lyase.